The primary structure comprises 1832 residues: Multifunctional protein pyr-3 (1832 aa).

The interval 2 to 400 (AATVYRPATA…PGPRDTEFLF (399 aa)) is GATase (Glutamine amidotransferase). Residues S64, G273, and G275 each contribute to the L-glutamine site. Residues 228 to 413 (RILCLDVGMK…IQTVAKCTTD (186 aa)) enclose the Glutamine amidotransferase type-1 domain. C302 functions as the Nucleophile; for GATase activity in the catalytic mechanism. Residues L303, Q306, N344, G346, and Y347 each contribute to the L-glutamine site. Catalysis depends on for GATase activity residues H386 and E388. Positions 401 to 442 (DVFIQTVAKCTTDNTLLQKGVEFPGGTTEENERLHPRVDVKK) are linker. The tract at residues 443–983 (VLVLGSGGLS…SEHDVSFEDR (541 aa)) is CPSase A. A CPSase (Carbamoyl phosphate synthase) region spans residues 443-1484 (VLVLGSGGLS…TNVKNAKILV (1042 aa)). Residues R560, R600, G606, G607, R637, M639, E644, G670, I671, H672, Q713, and E727 each coordinate ATP. 2 consecutive ATP-grasp domains span residues 564–756 (ARSM…KLGL) and 1102–1293 (SRML…KAIM). Residues Q713, E727, and N729 each coordinate Mg(2+). 3 residues coordinate Mn(2+): Q713, E727, and N729. Positions 984–1484 (GVMVLGSGVY…TNVKNAKILV (501 aa)) are CPSase B. Positions 1138, 1177, 1179, 1184, 1209, 1210, 1211, 1212, 1252, and 1264 each coordinate ATP. Residues Q1252, E1264, and N1266 each contribute to the Mg(2+) site. 3 residues coordinate Mn(2+): Q1252, E1264, and N1266. An MGS-like domain is found at 1359 to 1507 (FKVPKKNILL…RDYQTSHTPL (149 aa)). The tract at residues 1485-1528 (EAIARYRDMEIGERDYQTSHTPLQLSGQVNFTLQDSLSRPHSFK) is linker. The segment at 1529–1832 (KAHVLSVEQY…MALLALVMSG (304 aa)) is ATCase (Aspartate transcarbamylase). Residues R1581 and T1582 each coordinate carbamoyl phosphate. Residue K1609 participates in L-aspartate binding. The carbamoyl phosphate site is built by R1630, H1658, and Q1661. R1691 and R1754 together coordinate L-aspartate. Residues L1793 and P1794 each coordinate carbamoyl phosphate.

In the N-terminal section; belongs to the CarA family. The protein in the central section; belongs to the CarB family. It in the C-terminal section; belongs to the aspartate/ornithine carbamoyltransferase superfamily. ATCase family. It depends on Mg(2+) as a cofactor. Mn(2+) is required as a cofactor.

It is found in the cytoplasm. The protein resides in the nucleus. The catalysed reaction is hydrogencarbonate + L-glutamine + 2 ATP + H2O = carbamoyl phosphate + L-glutamate + 2 ADP + phosphate + 2 H(+). It catalyses the reaction L-glutamine + H2O = L-glutamate + NH4(+). The enzyme catalyses hydrogencarbonate + NH4(+) + 2 ATP = carbamoyl phosphate + 2 ADP + phosphate + 2 H(+). It carries out the reaction carbamoyl phosphate + L-aspartate = N-carbamoyl-L-aspartate + phosphate + H(+). Its pathway is pyrimidine metabolism; UMP biosynthesis via de novo pathway; (S)-dihydroorotate from bicarbonate: step 1/3. It participates in pyrimidine metabolism; UMP biosynthesis via de novo pathway; (S)-dihydroorotate from bicarbonate: step 2/3. Both CPSase and ATCase activities are feedback inhibited by the end product UTP. Multifunctional protein that encodes the first 2 enzymatic activities of the de novo pyrimidine pathway: carbamoylphosphate synthetase (CPSase; EC 6.3.5.5) and aspartate transcarbamylase (ATCase; EC 2.1.3.2). The CPSase-function is accomplished in 2 steps, by a glutamine-dependent amidotransferase activity (GATase) that binds and cleaves glutamine to produce ammonia, followed by an ammonium-dependent carbamoyl phosphate synthetase, which reacts with the ammonia, hydrogencarbonate and ATP to form carbamoyl phosphate. The endogenously produced carbamoyl phosphate is sequestered and channeled to the ATCase active site. ATCase then catalyzes the formation of carbamoyl-L-aspartate from L-aspartate and carbamoyl phosphate. This Neurospora crassa (strain ATCC 24698 / 74-OR23-1A / CBS 708.71 / DSM 1257 / FGSC 987) protein is Multifunctional protein pyr-3 (pyr-3).